A 248-amino-acid polypeptide reads, in one-letter code: Uridylate kinase (248 aa).

15–18 (KLSG) provides a ligand contact to ATP. The involved in allosteric activation by GTP stretch occupies residues 23-28 (GAEGFG). G57 is a UMP binding site. ATP contacts are provided by G58 and R62. UMP-binding positions include D77 and 138–145 (TGNPFFTT). ATP-binding residues include T165, Y171, and D174.

The protein belongs to the UMP kinase family. Homohexamer.

The protein resides in the cytoplasm. It carries out the reaction UMP + ATP = UDP + ADP. The protein operates within pyrimidine metabolism; CTP biosynthesis via de novo pathway; UDP from UMP (UMPK route): step 1/1. Allosterically activated by GTP. Inhibited by UTP. Its function is as follows. Catalyzes the reversible phosphorylation of UMP to UDP. The protein is Uridylate kinase of Yersinia enterocolitica serotype O:8 / biotype 1B (strain NCTC 13174 / 8081).